A 469-amino-acid polypeptide reads, in one-letter code: MVGFMIALSVSSGYLLDNNYSEYSYYILDNDEDFLVFVICDEPNTLKCGFRISEIFSRVFCNAVYNNRYITNLKNLIEVGIYEALENMDKFLKQKGLDYNDLNVSIAGGVYRNGKLMLFSLGNSPVFVVDKDYYLYCPFDLNKNYNLKDWKKFIKFSEVIENPKSVVACSNKLDGKVFKFKNENNKLIAEPFKYRIIQLINSIISNRENIDKIKEELKTDLNLKDNTPLFVASFDEKPINDELVKVGKPKLKVRGCTPILSKKKEETSPHIEPKIIKNMVLAFILILILIFGLFVMLSHNNLNGGNNSDIVNNSSYQVNTSKISIITVNNENKSTNISLNPIQTVKTVSSLNNLDLNNTITKSKNKDSLKILVKFQVGEISKDIKKLPISIMFPEQGYYYISIKSENSNLKLIDVENGEVVYKNTTLIELFEKIDGKEKTYNLIVEYNGSEIPSEKGINISIFEIKIIK.

This is an uncharacterized protein from Methanocaldococcus jannaschii (strain ATCC 43067 / DSM 2661 / JAL-1 / JCM 10045 / NBRC 100440) (Methanococcus jannaschii).